The chain runs to 293 residues: Methylsterol monooxygenase 1 (293 aa).

A run of 2 helical transmembrane segments spans residues 55-75 (LIVH…FQFI) and 100-120 (KILF…YYFT). The Fatty acid hydroxylase domain maps to 144-274 (GCAVIEDTWH…FTWWDKLFGT (131 aa)). The short motif at 157-161 (HRLLH) is the Histidine box-1 element. The Histidine box-2 motif lies at 170 to 174 (HKVHH). The helical transmembrane segment at 199-219 (FFIGIVLLCDHVILLWAWVTI) threads the bilayer. Residues 249–255 (HHDFHHM) carry the Histidine box-3 motif.

The protein belongs to the sterol desaturase family. Requires Fe cation as cofactor. Post-translationally, ubiquitinated by MARCHF6, leading to proteasomal degradation.

Its subcellular location is the endoplasmic reticulum membrane. The catalysed reaction is 4,4-dimethyl-5alpha-cholest-7-en-3beta-ol + 6 Fe(II)-[cytochrome b5] + 3 O2 + 5 H(+) = 4alpha-carboxy-4beta-methyl-5alpha-cholest-7-ene-3beta-ol + 6 Fe(III)-[cytochrome b5] + 4 H2O. The enzyme catalyses 4,4-dimethyl-5alpha-cholesta-8,24-dien-3beta-ol + 6 Fe(II)-[cytochrome b5] + 3 O2 + 5 H(+) = 4beta-methylzymosterol-4alpha-carboxylate + 6 Fe(III)-[cytochrome b5] + 4 H2O. It carries out the reaction 4alpha-methylzymosterol + 6 Fe(II)-[cytochrome b5] + 3 O2 + 5 H(+) = 4alpha-carboxyzymosterol + 6 Fe(III)-[cytochrome b5] + 4 H2O. It catalyses the reaction 4alpha-methyl-5alpha-cholest-7-en-3beta-ol + 6 Fe(II)-[cytochrome b5] + 3 O2 + 5 H(+) = 4alpha-carboxy-5alpha-cholest-7-en-3beta-ol + 6 Fe(III)-[cytochrome b5] + 4 H2O. The catalysed reaction is 4,4-dimethyl-5alpha-cholest-8-en-3beta-ol + 6 Fe(II)-[cytochrome b5] + 3 O2 + 5 H(+) = 4alpha-carboxy-4beta-methyl-5alpha-cholest-8-en-3beta-ol + 6 Fe(III)-[cytochrome b5] + 4 H2O. The enzyme catalyses 4alpha-methyl-5alpha-cholest-8-en-3beta-ol + 6 Fe(II)-[cytochrome b5] + 3 O2 + 5 H(+) = 4alpha-carboxy-5alpha-cholest-8-ene-3beta-ol + 6 Fe(III)-[cytochrome b5] + 4 H2O. The protein operates within steroid biosynthesis; zymosterol biosynthesis; zymosterol from lanosterol: step 3/6. It functions in the pathway steroid biosynthesis; cholesterol biosynthesis. In terms of biological role, catalyzes the three-step monooxygenation required for the demethylation of 4,4-dimethyl and 4alpha-methylsterols, which can be subsequently metabolized to cholesterol. This is Methylsterol monooxygenase 1 (Msmo1) from Mus musculus (Mouse).